We begin with the raw amino-acid sequence, 202 residues long: Nucleoside triphosphate pyrophosphatase (202 aa).

Asp77 acts as the Proton acceptor in catalysis.

Belongs to the Maf family. A divalent metal cation is required as a cofactor.

It is found in the cytoplasm. It carries out the reaction a ribonucleoside 5'-triphosphate + H2O = a ribonucleoside 5'-phosphate + diphosphate + H(+). It catalyses the reaction a 2'-deoxyribonucleoside 5'-triphosphate + H2O = a 2'-deoxyribonucleoside 5'-phosphate + diphosphate + H(+). Functionally, nucleoside triphosphate pyrophosphatase. May have a dual role in cell division arrest and in preventing the incorporation of modified nucleotides into cellular nucleic acids. The protein is Nucleoside triphosphate pyrophosphatase of Rickettsia canadensis (strain McKiel).